The following is a 284-amino-acid chain: Diaminopimelate epimerase (284 aa).

Residues Asn20, Gln53, and Asn73 each contribute to the substrate site. The Proton donor role is filled by Cys82. Residues 83–84 (GN), Asn167, Asn200, and 218–219 (ER) contribute to the substrate site. Catalysis depends on Cys227, which acts as the Proton acceptor. 228 to 229 (GS) contacts substrate.

This sequence belongs to the diaminopimelate epimerase family. Homodimer.

It is found in the cytoplasm. It catalyses the reaction (2S,6S)-2,6-diaminopimelate = meso-2,6-diaminopimelate. The protein operates within amino-acid biosynthesis; L-lysine biosynthesis via DAP pathway; DL-2,6-diaminopimelate from LL-2,6-diaminopimelate: step 1/1. Its function is as follows. Catalyzes the stereoinversion of LL-2,6-diaminopimelate (L,L-DAP) to meso-diaminopimelate (meso-DAP), a precursor of L-lysine and an essential component of the bacterial peptidoglycan. The chain is Diaminopimelate epimerase from Xanthomonas campestris pv. campestris (strain ATCC 33913 / DSM 3586 / NCPPB 528 / LMG 568 / P 25).